We begin with the raw amino-acid sequence, 185 residues long: Ribosome-recycling factor (185 aa).

This sequence belongs to the RRF family.

The protein localises to the cytoplasm. Functionally, responsible for the release of ribosomes from messenger RNA at the termination of protein biosynthesis. May increase the efficiency of translation by recycling ribosomes from one round of translation to another. The protein is Ribosome-recycling factor of Methylobacillus flagellatus (strain ATCC 51484 / DSM 6875 / VKM B-1610 / KT).